Reading from the N-terminus, the 259-residue chain is GTP cyclohydrolase FolE2 (259 aa).

It belongs to the GTP cyclohydrolase IV family.

The enzyme catalyses GTP + H2O = 7,8-dihydroneopterin 3'-triphosphate + formate + H(+). The protein operates within cofactor biosynthesis; 7,8-dihydroneopterin triphosphate biosynthesis; 7,8-dihydroneopterin triphosphate from GTP: step 1/1. Its function is as follows. Converts GTP to 7,8-dihydroneopterin triphosphate. This Thermotoga neapolitana (strain ATCC 49049 / DSM 4359 / NBRC 107923 / NS-E) protein is GTP cyclohydrolase FolE2.